Reading from the N-terminus, the 314-residue chain is Olfactory receptor 10T2 (314 aa).

Residues 1-26 (MRGFNKTTVVTQFILVGFSSLGELQL) are Extracellular-facing. Residue N5 is glycosylated (N-linked (GlcNAc...) asparagine). A helical membrane pass occupies residues 27 to 47 (LLFVIFLLLYLTILVANVTIM). The Cytoplasmic segment spans residues 48 to 55 (AVIRFSWT). The chain crosses the membrane as a helical span at residues 56-76 (LHTPMYGFLFILSFSESCYTF). Over 77 to 100 (VIIPQLLVHLLSDTKTISFMACAT) the chain is Extracellular. Cysteines 98 and 190 form a disulfide. The chain crosses the membrane as a helical span at residues 101–121 (QLFFFLGFACTNCLLIAVMGY). The Cytoplasmic segment spans residues 122 to 140 (DRYVAICHPLRYTLIINKR). Residues 141 to 161 (LGLELISLSGATGFFIALVAT) traverse the membrane as a helical segment. Residues 162–198 (NLICDMRFCGPNRVNHYFCDMAPVIKLACTDTHVKEL) are Extracellular-facing. The chain crosses the membrane as a helical span at residues 199 to 218 (ALFSLSILVIMVPFLLILIS). At 219-237 (YGFIVNTILKIPSAEGKKA) the chain is on the cytoplasmic side. The chain crosses the membrane as a helical span at residues 238–258 (FVTCASHLTVVFVHYGCASII). The Extracellular segment spans residues 259 to 271 (YLRPKSKSASDKD). A helical membrane pass occupies residues 272-292 (QLVAVTYTVVTPLLNPLVYSL). Topologically, residues 293 to 314 (RNKEVKTALKRVLGMPVATKMS) are cytoplasmic.

It belongs to the G-protein coupled receptor 1 family.

It is found in the cell membrane. In terms of biological role, odorant receptor. This chain is Olfactory receptor 10T2 (OR10T2), found in Homo sapiens (Human).